The chain runs to 992 residues: Aminopeptidase Q (992 aa).

Residues 2 to 13 lie on the Cytoplasmic side of the membrane; the sequence is GPPSSSGFYVSR. Residues 14–34 form a helical; Signal-anchor for type II membrane protein membrane-spanning segment; the sequence is AVALLLAALAAALLLALAVLA. Over 35–992 the chain is Extracellular; sequence ALYGRCARVQ…RMTAWLRKNT (958 aa). The interval 48–92 is disordered; sequence LHHGGVPDAASSPRGTQEEQLPTWPPRPTREPAGTATPGHWRPPG. N-linked (GlcNAc...) asparagine glycosylation is present at Asn133. Substrate is bound at residue Glu241. Residues Asn262, Asn289, Asn347, and Asn361 are each glycosylated (N-linked (GlcNAc...) asparagine). 380-384 contributes to the substrate binding site; sequence SAMEN. His416 lines the Zn(2+) pocket. Residue Glu417 is the Proton acceptor of the active site. Zn(2+) contacts are provided by His420 and Glu439. Asn489 is a glycosylation site (N-linked (GlcNAc...) asparagine). Tyr505 acts as the Proton donor in catalysis. N-linked (GlcNAc...) asparagine glycosylation is found at Asn584, Asn602, Asn609, Asn655, Asn811, Asn850, and Asn889.

This sequence belongs to the peptidase M1 family. Zn(2+) serves as cofactor. Expressed in skin. Expression levels do not differ between dark and light skin areas.

Its subcellular location is the membrane. Functionally, metalloprotease which may be important for placentation by regulating biological activity of key peptides at the embryo-maternal interface. Involved in coat pigmentation patterns. During skin development, may be required to establish the periodicity of tabby markings, initiating a pre-pattern at or before hair follicle development. This Acinonyx jubatus (Cheetah) protein is Aminopeptidase Q (LVRN).